Consider the following 207-residue polypeptide: High frequency lysogenization protein HflD homolog (207 aa).

This sequence belongs to the HflD family.

The protein localises to the cytoplasm. The protein resides in the cell inner membrane. The sequence is that of High frequency lysogenization protein HflD homolog from Azotobacter vinelandii (strain DJ / ATCC BAA-1303).